A 370-amino-acid polypeptide reads, in one-letter code: Trans-enoyl reductase xenG (370 aa).

The segment at 1-32 (MASTGLPQLPPSQKAVIQSEKTPGAFEVSENR) is disordered. NADP(+) is bound by residues 54–57 (CDWK), 177–180 (STAS), 200–203 (SPKN), tyrosine 218, 265–266 (FE), and 356–357 (VS).

Belongs to the zinc-containing alcohol dehydrogenase family. In terms of assembly, monomer.

It functions in the pathway mycotoxin biosynthesis. Trans-enoyl reductase; part of the gene cluster that mediates the biosynthesis of xenoacremones such as xenoacremone A, a compound that shows inhibitory activity toward the PI3K/AKT signaling pathway and which has the ability to induce apoptosis of A549 lung cancer cells. Within the pathway, cooperation of the hybrid PKS-NRPS xenE and the trans-acting enoyl reductase xenG is responsible for the formation of the reduced tyrosine-nonaketide derivative. The alpha/beta hydrolase xenA then accelerates intramolecular nucleophilic attack to give a pyrrolidone derivative. Subsequently, three enzymes, xenF, xenD, and xenC, coordinately participate in the conversion to xenoacremone B. XenF catalyzes sigmatropic rearrangement to form an A-ring, which leads to an unusual intermediate with a hexane ring, which is required for the formation of the tricarbocyclic product. Epoxidation catalyzed by xenD and the formation of the paracyclophane ether catalyzed by xenC initiate a spontaneous intramolecular Diels-Alder (IMDA) reaction to yield xenoacremone B. Spontaneous hydration of xenoacremone B leads to the formation of xenoacremone A, which undergoes subsequent methylation to afford xenoacremone C. The chain is Trans-enoyl reductase xenG from Xenoacremonium sinensis (Endophyte fungus).